A 336-amino-acid polypeptide reads, in one-letter code: GTPase Obg (336 aa).

Positions 1–159 (MKFVDEATLI…KTLKLELKLL (159 aa)) constitute an Obg domain. Residues 160–329 (ADVGLVGLPN…LIEAIFAQLR (170 aa)) form the OBG-type G domain. GTP-binding positions include 166-173 (GLPNAGKS), 191-195 (FTTLA), 213-216 (DIPG), 283-286 (NKMD), and 310-312 (SAI). Positions 173 and 193 each coordinate Mg(2+).

This sequence belongs to the TRAFAC class OBG-HflX-like GTPase superfamily. OBG GTPase family. Monomer. Mg(2+) serves as cofactor.

It is found in the cytoplasm. In terms of biological role, an essential GTPase which binds GTP, GDP and possibly (p)ppGpp with moderate affinity, with high nucleotide exchange rates and a fairly low GTP hydrolysis rate. Plays a role in control of the cell cycle, stress response, ribosome biogenesis and in those bacteria that undergo differentiation, in morphogenesis control. In Desulfatibacillum aliphaticivorans, this protein is GTPase Obg.